Here is a 360-residue protein sequence, read N- to C-terminus: Histidinol-phosphate aminotransferase (360 aa).

Lysine 222 carries the post-translational modification N6-(pyridoxal phosphate)lysine.

It belongs to the class-II pyridoxal-phosphate-dependent aminotransferase family. Histidinol-phosphate aminotransferase subfamily. Requires pyridoxal 5'-phosphate as cofactor.

The catalysed reaction is L-histidinol phosphate + 2-oxoglutarate = 3-(imidazol-4-yl)-2-oxopropyl phosphate + L-glutamate. Its pathway is amino-acid biosynthesis; L-histidine biosynthesis; L-histidine from 5-phospho-alpha-D-ribose 1-diphosphate: step 7/9. The chain is Histidinol-phosphate aminotransferase from Haloarcula marismortui (strain ATCC 43049 / DSM 3752 / JCM 8966 / VKM B-1809) (Halobacterium marismortui).